Consider the following 158-residue polypeptide: Cytochrome c-type biogenesis protein CcmE (158 aa).

Residues 1–7 (MKPRHRR) are Cytoplasmic-facing. Residues 8-28 (LTLIALVLGGLGLSAGLALTA) traverse the membrane as a helical; Signal-anchor for type II membrane protein segment. Residues 29 to 158 (FQDNLVFFFT…DGHPETTTAY (130 aa)) lie on the Periplasmic side of the membrane. Residues histidine 123 and tyrosine 127 each coordinate heme. The disordered stretch occupies residues 138–158 (RIGQGNGTPGPDGHPETTTAY).

Belongs to the CcmE/CycJ family.

It localises to the cell inner membrane. Functionally, heme chaperone required for the biogenesis of c-type cytochromes. Transiently binds heme delivered by CcmC and transfers the heme to apo-cytochromes in a process facilitated by CcmF and CcmH. The sequence is that of Cytochrome c-type biogenesis protein CcmE from Alkalilimnicola ehrlichii (strain ATCC BAA-1101 / DSM 17681 / MLHE-1).